Reading from the N-terminus, the 445-residue chain is Phosphoglucosamine mutase (445 aa).

Ser-102 (phosphoserine intermediate) is an active-site residue. Positions 102, 241, 243, and 245 each coordinate Mg(2+). Ser-102 carries the post-translational modification Phosphoserine.

This sequence belongs to the phosphohexose mutase family. It depends on Mg(2+) as a cofactor. Activated by phosphorylation.

It carries out the reaction alpha-D-glucosamine 1-phosphate = D-glucosamine 6-phosphate. Its function is as follows. Catalyzes the conversion of glucosamine-6-phosphate to glucosamine-1-phosphate. The polypeptide is Phosphoglucosamine mutase (Proteus mirabilis (strain HI4320)).